The sequence spans 707 residues: MSSALRSRARSASLGTTTQGWDPPPLRRPSRARRRQWMREAAQAAAQAAVQAAQAAAAQVAQAHVDEDEVVDLMTDEAGGGVTTLTTLSSVSTTTVLGHATFSACVRSDVMRDGEKEDAASDKENQRRPVVPSTSSRGSAASGDGYHGLRCRETSAMWSFEYDRDGDVTSVRRALFTGGSDPSDSVSGVRGGRKRPLRPPLVSLARTPLCRRRVGGVDAVLEENDVELRAESQDSAVASGPGRVPQPLSGSSGEESATAVEADSTSHDDVHCTCSNDQIITTSIRGLTCDPRMFLRLTHPELCELSISYLLVYVPKEDDFCHKICYAVDMSDESYRLGQGSFGEVWPLDRYRVVKVARKHSETVLTVWMSGLIRTRAAGEQQQPPSLVGTGVHRGLLTATGCCLLHNVTVHRRFHTDMFHHDQWKLACIDSYRRAFCTLADAIKFLNHQCRVCHFDITPMNVLIDVNPHNPSEIVRAALCDYSLSEPYPDYNERCVAVFQETGTARRIPNCSHRLRECYHPAFRPMPLQKLLICDPHARFPVAGLRRYCMSELSALGNVLGFCLMRLLDRRGLDEVRMGTEALLFKHAGAACRALENGKLTHCSDACLLILAAQMSYGACLLGEHGAALVSHTLRFVEAKMSSCRVRAFRRFYHECSQTMLHEYVRKNVERLLATSDGLYLYNAFRRTTSIICEEDLDGDCRQLFPE.

The segment covering 1–14 (MSSALRSRARSASL) has biased composition (low complexity). Disordered regions lie at residues 1–32 (MSSA…PSRA), 113–147 (DGEK…DGYH), 176–199 (FTGG…PLRP), and 231–264 (ESQD…EADS). Residues 113–127 (DGEKEDAASDKENQR) are compositionally biased toward basic and acidic residues. Over residues 178–188 (GGSDPSDSVSG) the composition is skewed to low complexity. Aspartate 456 acts as the Proton acceptor in catalysis.

The protein belongs to the protein kinase superfamily. Tyr protein kinase family. HCMV ganciclovir subfamily. Interacts with UL83. In terms of processing, autophosphorylates on serine and threonine residues.

It localises to the virion. The enzyme catalyses L-seryl-[protein] + ATP = O-phospho-L-seryl-[protein] + ADP + H(+). It catalyses the reaction L-threonyl-[protein] + ATP = O-phospho-L-threonyl-[protein] + ADP + H(+). Functionally, serine/threonine protein kinase that plays important roles in several processes including nuclear viral egress, viral replication or regulation of host cell cycle progression. Participates in the acquisition of tegument during virion morphogenesis in the nucleus. Redistributes the host nuclear lamina by phosphorylating cellular Lamins-A/C. Plays a role in viral DNA synthesis by phosphorylating the DNA polymerase processivity factor UL44. Stimulates host cell cycle to support viral DNA synthesis by phosphorylating host retinoblastoma/RB1 protein. Additional substrates have been identified including host EF1D or H2B. Also phosphorylates host SAMHD1 and thereby counteracts its antiviral effect by reducing its dNTP hydrolase activity. The chain is Serine/threonine protein kinase UL97 (UL97) from Homo sapiens (Human).